Consider the following 399-residue polypeptide: Zinc finger TRAF-type-containing protein 1 (399 aa).

A compositionally biased stretch (gly residues) spans M1–A13. The segment at M1–V20 is disordered. The segment at C106–R151 adopts an RING-type; degenerate zinc-finger fold. A TRAF-type zinc finger spans residues C152–C210.

It belongs to the ZFTRAF1 family. In terms of assembly, interacts with LGALS3.

The protein resides in the cytoplasm. It localises to the perinuclear region. The polypeptide is Zinc finger TRAF-type-containing protein 1 (Rattus norvegicus (Rat)).